Reading from the N-terminus, the 503-residue chain is ATP synthase subunit alpha (503 aa).

170–177 is an ATP binding site; it reads GDRKTGKT.

It belongs to the ATPase alpha/beta chains family. In terms of assembly, F-type ATPases have 2 components, CF(1) - the catalytic core - and CF(0) - the membrane proton channel. CF(1) has five subunits: alpha(3), beta(3), gamma(1), delta(1), epsilon(1). CF(0) has four main subunits: a, b, b' and c.

It is found in the cellular thylakoid membrane. It catalyses the reaction ATP + H2O + 4 H(+)(in) = ADP + phosphate + 5 H(+)(out). Its function is as follows. Produces ATP from ADP in the presence of a proton gradient across the membrane. The alpha chain is a regulatory subunit. The polypeptide is ATP synthase subunit alpha (Gloeothece citriformis (strain PCC 7424) (Cyanothece sp. (strain PCC 7424))).